Consider the following 273-residue polypeptide: Ciliary microtubule inner protein 2B (273 aa).

2 disordered regions span residues 59 to 85 and 123 to 164; these read TLLP…GHER and RHGE…HASP. Residues 123-159 show a composition bias toward basic and acidic residues; sequence RHGEQESHQLPDGAKGEREVEEDQLREAEEPPLKQEL.

The protein belongs to the CIMIP2 family. Microtubule inner protein component of sperm flagellar doublet microtubules. As to expression, expressed in airway epithelial cells.

It is found in the cytoplasm. Its subcellular location is the cytoskeleton. It localises to the cilium axoneme. The protein localises to the flagellum axoneme. Microtubule inner protein (MIP) part of the dynein-decorated doublet microtubules (DMTs) in cilia axoneme, which is required for motile cilia beating. This is Ciliary microtubule inner protein 2B (Cimip2b) from Mus musculus (Mouse).